A 516-amino-acid polypeptide reads, in one-letter code: Maturase K (516 aa).

Belongs to the intron maturase 2 family. MatK subfamily.

The protein localises to the plastid. It is found in the chloroplast. Functionally, usually encoded in the trnK tRNA gene intron. Probably assists in splicing its own and other chloroplast group II introns. The sequence is that of Maturase K from Chara vulgaris (Common stonewort).